The chain runs to 1746 residues: Tenascin (1746 aa).

Positions 1–22 are cleaved as a signal peptide; the sequence is MGVVTRLLVGTFLASLALPAQG. An involved in hexamer formation region spans residues 23-185; it reads GVLKKVIRHK…CEPGWKGPNC (163 aa). Asparagine 38 is a glycosylation site (N-linked (GlcNAc...) asparagine). Residues serine 65, serine 70, and serine 72 each carry the phosphoserine modification. Serine 72 carries an O-linked (Xyl...) (chondroitin sulfate) serine glycan. Positions 118–145 form a coiled coil; the sequence is DVKELLSRLEELENLVSSLREQCTSGAG. Asparagine 166 and asparagine 184 each carry an N-linked (GlcNAc...) asparagine glycan. The EGF-like 1; incomplete domain maps to 174 to 186; sequence CVCEPGWKGPNCS. EGF-like domains are found at residues 187–217, 218–249, 250–280, 281–311, 312–342, 343–373, 374–404, 405–435, 436–466, 467–497, 498–528, 529–559, 560–589, and 590–620; these read EPEC…EDCS, QLAC…DCSR, ETCP…EDCN, EPLC…EDCG, ELIC…EDCG, RLAC…ADCS, ERRC…EDCG, ELRC…EDCS, QLRC…YDCS, EMSC…EDCR, ELRC…PDCA, DLAC…KDCG, QRRC…GLDC, and GQRS…GEDC. 42 disulfides stabilise this stretch: cysteine 190/cysteine 200, cysteine 194/cysteine 205, cysteine 207/cysteine 216, cysteine 221/cysteine 231, cysteine 225/cysteine 236, cysteine 238/cysteine 247, cysteine 252/cysteine 263, cysteine 256/cysteine 268, cysteine 270/cysteine 279, cysteine 284/cysteine 294, cysteine 288/cysteine 299, cysteine 301/cysteine 310, cysteine 315/cysteine 325, cysteine 319/cysteine 330, cysteine 332/cysteine 341, cysteine 346/cysteine 356, cysteine 350/cysteine 361, cysteine 363/cysteine 372, cysteine 377/cysteine 387, cysteine 381/cysteine 392, cysteine 394/cysteine 403, cysteine 408/cysteine 418, cysteine 412/cysteine 423, cysteine 425/cysteine 434, cysteine 439/cysteine 449, cysteine 443/cysteine 454, cysteine 456/cysteine 465, cysteine 470/cysteine 480, cysteine 474/cysteine 485, cysteine 487/cysteine 496, cysteine 501/cysteine 511, cysteine 505/cysteine 516, cysteine 518/cysteine 527, cysteine 532/cysteine 542, cysteine 536/cysteine 547, cysteine 549/cysteine 558, cysteine 563/cysteine 573, cysteine 567/cysteine 578, cysteine 580/cysteine 589, cysteine 594/cysteine 604, cysteine 598/cysteine 609, and cysteine 611/cysteine 620. N-linked (GlcNAc...) asparagine glycosylation occurs at asparagine 327. 10 Fibronectin type-III domains span residues 625-717, 718-801, 805-894, 895-988, 989-1075, 1076-1166, 1167-1256, 1257-1346, 1347-1433, and 1434-1522; these read PPKD…TPEG, LKFK…VTTT, APSQ…TGLD, APRN…LDPP, KDFR…AGEP, EIGN…EAEP, EVDN…TAMG, SPKE…ALDG, PSGL…TDLD, and SPRD…IGLL. N-linked (GlcNAc...) asparagine glycosylation is present at asparagine 788. Residue threonine 905 is modified to Phosphothreonine. N-linked (GlcNAc...) asparagine glycans are attached at residues asparagine 1034, asparagine 1079, and asparagine 1121. An N-linked (GlcNAc...) asparagine glycan is attached at asparagine 1354. The region spanning 1520–1735 is the Fibrinogen C-terminal domain; sequence GLLYPFPRDC…FAEMKLRPSN (216 aa).

It belongs to the tenascin family. As to quaternary structure, homohexamer; disulfide-linked. A homotrimer may be formed in the triple coiled-coil region and may be stabilized by disulfide rings at both ends. Two of such half-hexabrachions may be disulfide linked within the central globule. Interacts with CSPG4. Interacts (via the 3rd fibronectin type-III domain) with integrin ITGA9:ITGB1. In terms of tissue distribution, submaxillary glands and brain.

The protein localises to the secreted. It localises to the extracellular space. The protein resides in the extracellular matrix. In terms of biological role, extracellular matrix protein implicated in guidance of migrating neurons as well as axons during development, synaptic plasticity as well as neuronal regeneration. Promotes neurite outgrowth from cortical neurons grown on a monolayer of astrocytes. Ligand for integrins alpha-8/beta-1, alpha-9/beta-1, alpha-V/beta-3 and alpha-V/beta-6. In tumors, stimulates angiogenesis by elongation, migration and sprouting of endothelial cells. This chain is Tenascin (TNC), found in Sus scrofa (Pig).